The chain runs to 385 residues: Chaperone protein DnaJ (385 aa).

A J domain is found at 5-70 (DFYEVLGVSR…QKKAAYDQYG (66 aa)). The segment at 137–214 (GVSKEIEVPT…CHGQGRKQKT (78 aa)) adopts a CR-type zinc-finger fold. Zn(2+)-binding residues include C150, C153, C167, C170, C189, C192, C202, and C205. CXXCXGXG motif repeat units lie at residues 150 to 157 (CDTCDGSG), 167 to 174 (CGTCHGHG), 189 to 196 (CPTCHGKG), and 202 to 209 (CNECHGQG).

This sequence belongs to the DnaJ family. In terms of assembly, homodimer. Zn(2+) serves as cofactor.

It localises to the cytoplasm. Its function is as follows. Participates actively in the response to hyperosmotic and heat shock by preventing the aggregation of stress-denatured proteins and by disaggregating proteins, also in an autonomous, DnaK-independent fashion. Unfolded proteins bind initially to DnaJ; upon interaction with the DnaJ-bound protein, DnaK hydrolyzes its bound ATP, resulting in the formation of a stable complex. GrpE releases ADP from DnaK; ATP binding to DnaK triggers the release of the substrate protein, thus completing the reaction cycle. Several rounds of ATP-dependent interactions between DnaJ, DnaK and GrpE are required for fully efficient folding. Also involved, together with DnaK and GrpE, in the DNA replication of plasmids through activation of initiation proteins. This chain is Chaperone protein DnaJ, found in Vibrio harveyi (Beneckea harveyi).